A 258-amino-acid chain; its full sequence is Thymidylate synthase (258 aa).

Residue R21 coordinates dUMP. Position 51 (H51) interacts with (6R)-5,10-methylene-5,6,7,8-tetrahydrofolate. A dUMP-binding site is contributed by 121 to 122 (RR). Catalysis depends on C141, which acts as the Nucleophile. DUMP is bound by residues 161 to 164 (RSAD), N172, and 202 to 204 (HLY). D164 contacts (6R)-5,10-methylene-5,6,7,8-tetrahydrofolate. Position 257 (A257) interacts with (6R)-5,10-methylene-5,6,7,8-tetrahydrofolate.

This sequence belongs to the thymidylate synthase family. Bacterial-type ThyA subfamily. As to quaternary structure, homodimer.

The protein resides in the cytoplasm. The enzyme catalyses dUMP + (6R)-5,10-methylene-5,6,7,8-tetrahydrofolate = 7,8-dihydrofolate + dTMP. It participates in pyrimidine metabolism; dTTP biosynthesis. Functionally, catalyzes the reductive methylation of 2'-deoxyuridine-5'-monophosphate (dUMP) to 2'-deoxythymidine-5'-monophosphate (dTMP) while utilizing 5,10-methylenetetrahydrofolate (mTHF) as the methyl donor and reductant in the reaction, yielding dihydrofolate (DHF) as a by-product. This enzymatic reaction provides an intracellular de novo source of dTMP, an essential precursor for DNA biosynthesis. The sequence is that of Thymidylate synthase from Dichelobacter nodosus (strain VCS1703A).